The following is a 792-amino-acid chain: Ribosome biogenesis protein BOP1 homolog (792 aa).

Over residues Met1–Val11 the composition is skewed to basic residues. Residues Met1–Ile167 are disordered. 4 stretches are compositionally biased toward acidic residues: residues Glu44–Asp53, Ser60–Gly72, Glu82–Ala117, and Glu157–Asp166. WD repeat units follow at residues Gly453–Glu494, Asn496–Ile534, Thr578–Pro620, Lys623–Lys661, Thr664–Gln703, Leu707–Gln746, and Arg762–Thr792.

It belongs to the WD repeat BOP1/ERB1 family.

It localises to the nucleus. Its subcellular location is the nucleolus. The protein resides in the nucleoplasm. Its function is as follows. Required for maturation of ribosomal RNAs and formation of the large ribosomal subunit. The chain is Ribosome biogenesis protein BOP1 homolog from Drosophila mojavensis (Fruit fly).